A 601-amino-acid polypeptide reads, in one-letter code: MTASAQKNIRNFSIVAHIDHGKSTLADRLIQITGGLTEREMTDQVLDSMDIERERGITIKAQTVRLSYKAKDGETYILNLIDTPGHVDFAYEVNRSLAAVEGSLLVVDASQGVEAQTLANVYQAIDNNHDIVPVLNKVDLPAAEPEKVKAQIEDVIGLDASDAIGISAKTGLNVDQVLEAIVTRLPPPMGDRAAPLKALLVDSWYDTYLGVVVLVRIIDGVLKKGQRIKMMGSGAVNDVDRVGVFTPKMVAMAELGPGEIGFLTGSIKEVADTRVGDTITEDKRPCADMLPGFKPAQPVVFCGLFPVDAAQFEDLRAAMGKLRLNDASFSYEMETSAALGFGFRCGFLGLLHLEIIQERLEREFNLDLIATAPSVIYEIQMTDGSVIDLHNPADMPDVVKIEEIREPWIRATILTPDEYLGSVLKLCQDRRGTQIELTYVGARAMVTYDLPLNEVVFDFYDRLKSISKGYASFDYQITEYRAGDLVKMSILVNSEPVDALSMLVHRARADARGRVMCEKLKDLIPQHLFNIPIQAAIGAKIIARETIKALRKDVTAKCYGGDISRKRKLLDKQKEGKKKMRQFGKVEIPQEAFIAALKMDE.

The 183-residue stretch at 7 to 189 folds into the tr-type G domain; the sequence is KNIRNFSIVA…AIVTRLPPPM (183 aa). GTP contacts are provided by residues 19-24 and 136-139; these read DHGKST and NKVD.

It belongs to the TRAFAC class translation factor GTPase superfamily. Classic translation factor GTPase family. LepA subfamily.

Its subcellular location is the cell inner membrane. It carries out the reaction GTP + H2O = GDP + phosphate + H(+). Functionally, required for accurate and efficient protein synthesis under certain stress conditions. May act as a fidelity factor of the translation reaction, by catalyzing a one-codon backward translocation of tRNAs on improperly translocated ribosomes. Back-translocation proceeds from a post-translocation (POST) complex to a pre-translocation (PRE) complex, thus giving elongation factor G a second chance to translocate the tRNAs correctly. Binds to ribosomes in a GTP-dependent manner. This chain is Elongation factor 4, found in Xanthobacter autotrophicus (strain ATCC BAA-1158 / Py2).